The following is a 687-amino-acid chain: Chloride channel protein ClC-Kb (687 aa).

Residues 1 to 50 (MEELVGLREGASKKPVPLQELWGPCPRIRRNIQGGLEWLKERLFRVGEDW) lie on the Cytoplasmic side of the membrane. 2 helical membrane-spanning segments follow: residues 51–82 (YFLVALGVLMALISYAMNFTIGRVVRAHKWLY) and 91–111 (LRYLSWTVYPVALLSFSSGFS). The helical intramembrane region spans 116–127 (PSSGGSGIPEVK). Residue serine 121 coordinates chloride. 2 helical membrane passes run 141–160 (IKNFGAKVVGLSCTLATGST) and 161–180 (IFLGKLGPFVHLSVMIAAYL). Residues 203–224 (AGAAVGVATVFAAPISGVLFSI) constitute an intramembrane region (helical). Residues 236–255 (YWRGFFAATCGAFMFHLLAV) form a helical membrane-spanning segment. Ca(2+) contacts are provided by glutamate 259, glutamate 261, aspartate 278, and glutamate 281. The next 2 helical transmembrane spans lie at 282–310 (IFFFVALGAICGILSCGYNYSQRTFLFFL) and 325–342 (PLYSALAAVVLASITYPP). Positions 349 to 360 (ASRLSMSEHLET) form an intramembrane region, helical. 2 helical membrane passes run 400 to 420 (GTLVFFLVMKFWMLILATTIP) and 421 to 440 (IPAGYFLPIFIYGAVIGRLF). Chloride is bound at residue phenylalanine 426. Positions 464–496 (GAYALAGAAAFSGAVTHTLSTALLAFEVTGQLV) form an intramembrane region, helical. A helical transmembrane segment spans residues 500 to 520 (PVLMAVLAANAISQSFQPSFY). Residues 521-687 (DGTIIVKKLP…STLTNPPAPK (167 aa)) are Cytoplasmic-facing. 2 consecutive CBS domains span residues 551–609 (MNCA…EPAS) and 626–687 (CPTQ…PAPK).

This sequence belongs to the chloride channel (TC 2.A.49) family. CLCNKB subfamily. As to quaternary structure, homodimer. Interacts with BSND. In terms of processing, N-glycosylated. Specifically expressed in the kidney, predominantly in the outer medulla and cortex. All nephron segments expressing BSND also express CLCNK proteins.

The protein localises to the basolateral cell membrane. It catalyses the reaction chloride(in) = chloride(out). It carries out the reaction iodide(out) = iodide(in). The enzyme catalyses nitrate(in) = nitrate(out). The catalysed reaction is bromide(in) = bromide(out). Its function is as follows. Anion-selective channel permeable to small monovalent anions with ion selectivity for chloride &gt; bromide &gt; nitrate &gt; iodide. Forms a homodimeric channel where each subunit has its own ion conduction pathway. May conduct double-barreled currents controlled by two types of gates, two fast gates that control each subunit independently and a slow common gate that opens and shuts off both subunits simultaneously. Assembles with the regulatory subunit BSND/Barttin for sorting at the basolateral plasma membrane domain and functional switch to the ion conducting state. CLCNKB:BSND channels display mostly a linear current-voltage relationship controlled by common gate. Mediates chloride conductance along nephron segments, namely the thick ascending limb of Henle's loop, convoluted tubule and the collecting duct, contributing to the maintenance of systemic acid-base and electrolyte homeostasis. Conducts chloride currents in the stria vascularis of the inner ear to establish the endocochlear potential necessary for normal hearing. The protein is Chloride channel protein ClC-Kb of Mus musculus (Mouse).